The following is a 1659-amino-acid chain: Daxx-like protein (1659 aa).

Disordered stretches follow at residues 1–25 (MSAS…RRRL) and 265–336 (QLQQ…VRSL). A coiled-coil region spans residues 438 to 469 (LGQLQQEQQKILGQLQQQKQQQQQQQKKILGQ). Low complexity-rich tracts occupy residues 506-520 (SVGQ…QSQQ), 528-542 (KQQP…VGQF), and 600-625 (GQLQ…QQQQ). 7 disordered regions span residues 506–542 (SVGQ…VGQF), 600–645 (GQLQ…TLAG), 658–713 (SAGQ…MPQK), 872–894 (TLPF…HVQG), 924–952 (LPPT…VQQQ), 1023–1060 (VESP…QSRA), and 1536–1555 (FKIA…EDDD). Positions 626-635 (KISAGQLQEH) are enriched in polar residues. 2 stretches are compositionally biased toward low complexity: residues 636 to 645 (SQQQQKTLAG) and 658 to 698 (SAGQ…QPQQ). Composition is skewed to polar residues over residues 699–711 (RTSA…QQMP) and 885–894 (APMTSTHVQG). The segment at 870–1659 (ARTLPFRSSQ…DQIIISDEES (790 aa)) is necessary for interaction with His3.3A and His3.3B. The span at 924–937 (LPPTTSITPQLTPT) shows a compositional bias: low complexity. Residues 1541 to 1555 (DGDDSEEESDSEDDD) show a composition bias toward acidic residues.

In terms of assembly, interacts with p53 (via C-terminus). Interacts (via C-terminus) with His3.3A and His3.3B. Interacts with asf1. In terms of tissue distribution, ubiquitously expressed with higher levels in the head (at protein level). Expressed in the germ line, with prominent expression in primary spermatocytes and meiotic spermatocytes (at protein level). In ovaries, expressed in nurse cells and in the germinal vesicle of the ovarian follicle at stage 10 (at protein level).

The protein localises to the cytoplasm. It is found in the cytosol. Its subcellular location is the nucleus. It localises to the chromosome. Functionally, transcription regulator. Acts as a histone chaperone that facilitates deposition of histone H3.3. Has a role in chromatin remodeling together with asf1 and XNP. Has role in the transcriptional apoptotic response to oxidative and UV stress. The protein is Daxx-like protein of Drosophila melanogaster (Fruit fly).